Consider the following 138-residue polypeptide: High mobility group B protein 4 (138 aa).

2 disordered regions span residues 1–41 (MKGG…PPSA) and 105–138 (LKLA…EDDD). A compositionally biased stretch (basic residues) spans 18–29 (KTRGRKAGKKTK). Positions 35-104 (PKRPPSAFFV…EYIKNVQQYN (70 aa)) form a DNA-binding region, HMG box. A phosphoserine mark is found at Ser-123 and Ser-130. Over residues 126–138 (DEAVSEEEAEDDD) the composition is skewed to acidic residues.

It belongs to the HMGB family. Mostly expressed roots and flowers, and, to a lower extent, in stems and leaves.

The protein localises to the nucleus. It localises to the cytoplasm. It is found in the cytosol. Its function is as follows. Binds preferentially double-stranded DNA. This is High mobility group B protein 4 (HMGB4) from Arabidopsis thaliana (Mouse-ear cress).